The primary structure comprises 688 residues: ATP-dependent RNA helicase ded1 (688 aa).

Polar residues-rich tracts occupy residues 1–15 and 55–67; these read MADQ…LSID and GLNN…NNNY. A disordered region spans residues 1 to 170; the sequence is MADQLSSGMG…TPDDPSKQHT (170 aa). A compositionally biased stretch (gly residues) spans 88-102; it reads GFEGQQGAGWGGPRP. A compositionally biased stretch (low complexity) spans 103 to 114; sequence QGGFNPNAYRGN. Over residues 115–129 the composition is skewed to gly residues; it reads AGAGAGAGAGGGGGS. Positions 194–222 match the Q motif motif; it reads LTFSNPPLDNHLISNIQLARYNVPTPVQK. The region spanning 225-416 is the Helicase ATP-binding domain; the sequence is IPIVMGGRDL…RDFLKDYIFL (192 aa). ATP is bound at residue 238–245; that stretch reads AQTGSGKT. The DEAD box motif lies at 360–363; the sequence is DEAD. In terms of domain architecture, Helicase C-terminal spans 427–587; that stretch reads NITQKVEYVE…EVPAFLETIA (161 aa). Positions 590 to 615 are disordered; it reads SSFGGGRGGRGGGRGGGRGRTQTADY. Over residues 592–608 the composition is skewed to gly residues; that stretch reads FGGGRGGRGGGRGGGRG.

The protein belongs to the DEAD box helicase family. DDX3/DED1 subfamily.

It localises to the cytoplasm. It catalyses the reaction ATP + H2O = ADP + phosphate + H(+). In terms of biological role, ATP-binding RNA helicase involved in translation initiation. Remodels RNA in response to ADP and ATP concentrations by facilitating disruption, but also formation of RNA duplexes. The protein is ATP-dependent RNA helicase ded1 (drh-9) of Neurospora crassa (strain ATCC 24698 / 74-OR23-1A / CBS 708.71 / DSM 1257 / FGSC 987).